The sequence spans 506 residues: Exopolyphosphatase (506 aa).

Belongs to the GppA/Ppx family. As to quaternary structure, homodimer. The cofactor is Mg(2+).

Its subcellular location is the cell membrane. It catalyses the reaction [phosphate](n) + H2O = [phosphate](n-1) + phosphate + H(+). The enzyme catalyses [phosphate](n) + ATP = [phosphate](n+1) + ADP. Its activity is regulated as follows. Exopolyphosphatase activity is stimulated by NH(4)(+) and K(+). Phosphotransferase activity is insensitive to the addition of K(+) or NH(4)(+) ions. Degradation of inorganic polyphosphates (polyP). Releases orthophosphate processively from the ends of the polyP chain. Also has polyphosphate:ADP phosphotransferase activity, catalyzing the production of ATP from ADP and polyP. The sequence is that of Exopolyphosphatase from Pseudomonas aeruginosa (strain ATCC 15692 / DSM 22644 / CIP 104116 / JCM 14847 / LMG 12228 / 1C / PRS 101 / PAO1).